A 142-amino-acid chain; its full sequence is Hemoglobin subunit alpha-2 (142 aa).

One can recognise a Globin domain in the interval 2 to 142 (LLSADDKKHI…VSTVLTSKYR (141 aa)). An O2-binding site is contributed by H59. H88 is a binding site for heme b.

Belongs to the globin family. As to quaternary structure, heterotetramer of two alpha chains and two beta chains. As to expression, red blood cells.

Involved in oxygen transport from the lung to the various peripheral tissues. In Xenopus laevis (African clawed frog), this protein is Hemoglobin subunit alpha-2 (hba2).